The primary structure comprises 210 residues: MTASPVLGNLFIIAAPSGAGKSSLIRALLEKHPDQSMQVSVSSTTRAPRPGEVQGVHYHFLSTEEFEQRIDAGEFYEWARVFGNYYGTSRKVVESLLAEGKDVFLDIDWQGAQQVREHHPEVRSVFIVPPSLEILEERLRVRGQDSDEVIAERMAKAQAEMSHYHEFDYLLVNDDFNNSLASLEHIVLAQRQKMPHQQIRYSSVLKELLG.

The Guanylate kinase-like domain maps to 8 to 188; that stretch reads GNLFIIAAPS…SLASLEHIVL (181 aa). 15–22 contributes to the ATP binding site; the sequence is APSGAGKS.

This sequence belongs to the guanylate kinase family.

It localises to the cytoplasm. The enzyme catalyses GMP + ATP = GDP + ADP. In terms of biological role, essential for recycling GMP and indirectly, cGMP. In Idiomarina loihiensis (strain ATCC BAA-735 / DSM 15497 / L2-TR), this protein is Guanylate kinase.